Here is a 293-residue protein sequence, read N- to C-terminus: Glycine--tRNA ligase alpha subunit (293 aa).

It belongs to the class-II aminoacyl-tRNA synthetase family. As to quaternary structure, tetramer of two alpha and two beta subunits.

The protein resides in the cytoplasm. It catalyses the reaction tRNA(Gly) + glycine + ATP = glycyl-tRNA(Gly) + AMP + diphosphate. This Oceanobacillus iheyensis (strain DSM 14371 / CIP 107618 / JCM 11309 / KCTC 3954 / HTE831) protein is Glycine--tRNA ligase alpha subunit.